The sequence spans 346 residues: GTPase Obg (346 aa).

The region spanning 1 to 159 (MRFVDEVTFV…RELRLELQLL (159 aa)) is the Obg domain. Residues 128-148 (LHFKSSTNRAPRQSTEGTAGE) form a disordered region. A compositionally biased stretch (polar residues) spans 130-144 (FKSSTNRAPRQSTEG). The OBG-type G domain maps to 160 to 335 (ADVGLLGMPN…LCGDIMNDLE (176 aa)). GTP contacts are provided by residues 166–173 (GMPNVGKS), 191–195 (FTTLY), 213–216 (DIPG), 285–288 (NRLD), and 316–318 (SGL). Mg(2+) is bound by residues Ser-173 and Thr-193.

It belongs to the TRAFAC class OBG-HflX-like GTPase superfamily. OBG GTPase family. Monomer. Requires Mg(2+) as cofactor.

It localises to the cytoplasm. Its function is as follows. An essential GTPase which binds GTP, GDP and possibly (p)ppGpp with moderate affinity, with high nucleotide exchange rates and a fairly low GTP hydrolysis rate. Plays a role in control of the cell cycle, stress response, ribosome biogenesis and in those bacteria that undergo differentiation, in morphogenesis control. This chain is GTPase Obg, found in Halorhodospira halophila (strain DSM 244 / SL1) (Ectothiorhodospira halophila (strain DSM 244 / SL1)).